We begin with the raw amino-acid sequence, 28 residues long: MPKIIEAVYENGVFKPLQKVDLREGERE.

Belongs to the UPF0165 family.

Functionally, possibly the antitoxin component of a type II toxin-antitoxin (TA) system. This Archaeoglobus fulgidus (strain ATCC 49558 / DSM 4304 / JCM 9628 / NBRC 100126 / VC-16) protein is Putative antitoxin AF_1079.